The primary structure comprises 154 residues: Anti-sigma-E factor RseA (154 aa).

Residue threonine 39 is modified to Phosphothreonine; by PknB. Zn(2+) contacts are provided by histidine 66, cysteine 70, and cysteine 73. Positions 104 to 154 (SEIPRCPPEGPSKGSSGGSSQGPPDGAAAGFGDRFADGDGGNRGRQSRVRR) are disordered. Low complexity predominate over residues 124 to 136 (QGPPDGAAAGFGD).

It belongs to the zinc-associated anti-sigma factor (ZAS) superfamily. As to quaternary structure, interacts with cognate ECF RNA polymerase sigma factor SigE under reducing conditions; this inhibits the interaction of SigE with the RNA polymerase catalytic core. Requires Zn(2+) as cofactor. Phosphorylated by PknB on Thr-39; can be dephosphorylated (at least in vitro) by PstP. Phosphorylation is the signal for subsequent degradation by the ClpC1-ClpP2 complex. In terms of processing, degraded following vancomycin treatment (surface stress) by a ClpC1-ClpP2 complex.

The protein resides in the cytoplasm. Functionally, an anti-sigma factor for extracytoplasmic function (ECF) sigma factor SigE. ECF sigma factors are held in an inactive form by an anti-sigma factor. This is Anti-sigma-E factor RseA (rseA) from Mycobacterium tuberculosis (strain ATCC 25618 / H37Rv).